The primary structure comprises 1173 residues: MEGSLLVASSTSNNETANTASTDGATRRLSFAKIHEPLDVPNLLALQTDSFDWLVGNERWQARVAKAVEEGDLSVATTSGLADIFEEISPIEDFQGTMSLSFSEPEFADPKYTMAECKDRDATYSAPLYVKAEFMNNNTGEIKQQTVFMGDFPLMTEKGTFVVNGTERVVVSQLVRSPGAYFERTADKTSDKDIFTAKIIPSRGAWFELEIDKRDQVGVRLDRKRKQSVTVLLKALGWTEGQILEEFGQYDSMRATLEKDATETREDALLDIYRKLRPGEPPTVEAAQSLLDNLYFNAKRYDLAKVGRYKINRKLGIDRSLGDKEASVLHVEDIVAMIKFLVALHAGEKTLMGKRDGEDHELRVDVDDIDHFGNRRIRAVGELIENQVRTGLSRMERVVRERMTTQDVEAITPQTLINIRPVVAAIKEFFGTSQLSQFMDQNNPLSGLTHKRRLSALGPGGLSRDRAGMEVRDVHPSHYGRMCPIETPEGPNIGLIGSLASYGRINPFGFIETPYRLVSEGVVSDEVQYLTADDEAEVLIAQANAPLDADKKFSEETVLVRARGGGGEPVLVPAADVQFMDVSPRQMVSVATALIPFLEHDDANRALMGANMQRQAVPLVRSEAPFVGTGMERAAAVDAGDVVIAKKAGVVTEVSAELVVMINDDGTETNYRINKFARSNQGNCYNHRVLVNEGQRLEVGGIIADGPATDQGELALGKNLLVAFMSWEGHNFEDAIILSQRIVAEDVLSSIHIEEHEIDARDTKLGAEEITRDIPNVSEEVLAGLDERGIIHIGAEVEAGDILVGKVTPKGETELTPEERLLRAIFGEKSREVRDTSLKVPHGESGTVIGVRVFDRDNDDELPPGVNQLVRVYVAAKRKITDGDKLAGRHGNKGVISKILPIEDMPFLADGTPVDIVLNPLGVPGRMNVGQVLETHLGWVAKTGWKIEGEPEWVKNLPNLPRETGQTTVATPVFDGAREEEITGLLDSTNVTRDGDRLIDSSGKTRLFDGRSGEPFPDPISVGYMYILKLHHLVDDKIHARSTGPYSMITQQPLGGKAQFGGQRFGEMEVWALEAYGAAYTLQELLTIKSDDIHGRVKVYEAIVKGENIPEPGVPESFKVLIKEMQSLCLNVEVLSTDGTTIEMRDSDDAVFTAAEELGIDLSRAEPSSVEEV.

Positions M1–D23 are disordered. The segment covering A8–T22 has biased composition (low complexity).

The protein belongs to the RNA polymerase beta chain family. In terms of assembly, the RNAP catalytic core consists of 2 alpha, 1 beta, 1 beta' and 1 omega subunit. When a sigma factor is associated with the core the holoenzyme is formed, which can initiate transcription.

It carries out the reaction RNA(n) + a ribonucleoside 5'-triphosphate = RNA(n+1) + diphosphate. Its function is as follows. DNA-dependent RNA polymerase catalyzes the transcription of DNA into RNA using the four ribonucleoside triphosphates as substrates. The protein is DNA-directed RNA polymerase subunit beta of Paenarthrobacter aurescens (strain TC1).